Consider the following 176-residue polypeptide: Peptide deformylase (176 aa).

Residues Cys-94 and His-136 each contribute to the Fe cation site. The active site involves Glu-137. His-140 serves as a coordination point for Fe cation.

The protein belongs to the polypeptide deformylase family. Requires Fe(2+) as cofactor.

The catalysed reaction is N-terminal N-formyl-L-methionyl-[peptide] + H2O = N-terminal L-methionyl-[peptide] + formate. Functionally, removes the formyl group from the N-terminal Met of newly synthesized proteins. Requires at least a dipeptide for an efficient rate of reaction. N-terminal L-methionine is a prerequisite for activity but the enzyme has broad specificity at other positions. In Mesorhizobium japonicum (strain LMG 29417 / CECT 9101 / MAFF 303099) (Mesorhizobium loti (strain MAFF 303099)), this protein is Peptide deformylase.